The chain runs to 299 residues: MIDVGLRIDVDTFRGTRDGVPRLLQTLDRHQIKASFFFSVGPDNMGRHLWRLLKPRFLLKMLRSNAASLYGLDILLAGTAWPGKSIGKQLGSLMRDTDSARHEVGLHAWDHHGWQANTGRWDEATLIHQTRLGVDALNQILRREVDCSAAAGWRADPLTTQAKEAFGFRYNSDCRGSGLFRPLLQDGRPGTPQIPVNLPTFDEVVGTEVTTAQFNAFMLDRLCTPPQVAPHVYTIHAEVEGIVMADQFDALLAEASARGIRFVPLGSLLPPDPAQLDAGRLVRGTLPGREGWLGCKADV.

Residues 2–263 enclose the NodB homology domain; it reads IDVGLRIDVD…EASARGIRFV (262 aa).

The protein belongs to the polysaccharide deacetylase family. ArnD deformylase subfamily.

It catalyses the reaction 4-deoxy-4-formamido-alpha-L-arabinopyranosyl di-trans,octa-cis-undecaprenyl phosphate + H2O = 4-amino-4-deoxy-alpha-L-arabinopyranosyl di-trans,octa-cis-undecaprenyl phosphate + formate. Its pathway is glycolipid biosynthesis; 4-amino-4-deoxy-alpha-L-arabinose undecaprenyl phosphate biosynthesis; 4-amino-4-deoxy-alpha-L-arabinose undecaprenyl phosphate from UDP-4-deoxy-4-formamido-beta-L-arabinose and undecaprenyl phosphate: step 2/2. It participates in bacterial outer membrane biogenesis; lipopolysaccharide biosynthesis. Catalyzes the deformylation of 4-deoxy-4-formamido-L-arabinose-phosphoundecaprenol to 4-amino-4-deoxy-L-arabinose-phosphoundecaprenol. The modified arabinose is attached to lipid A and is required for resistance to polymyxin and cationic antimicrobial peptides. This chain is Probable 4-deoxy-4-formamido-L-arabinose-phosphoundecaprenol deformylase ArnD, found in Aeromonas salmonicida (strain A449).